The chain runs to 191 residues: Scytalone dehydratase PfmaJ (191 aa).

Substrate contacts are provided by Y25, Y45, and F48. Catalysis depends on residues H80 and H105. Residue N126 participates in substrate binding.

This sequence belongs to the scytalone dehydratase family. Homotrimer. Each subunit contains an active site, located in the central part of the hydrophobic core of the monomer, which functions independently.

It is found in the endosome. It catalyses the reaction scytalone = 1,3,8-trihydroxynaphthalene + H2O. It participates in pigment biosynthesis; melanin biosynthesis. Functionally, scytalone dehydratase involved the biosynthesis of dihydroxynaphthalene (DHN)-melanin, a bluish-green pigment forming a dark layer in the conidial wall that protects the conidia from UV radiations. The first step of the pathway is the production of the pentaketide 1,3,6,8-tetrahydroxynaphthalene (1,3,6,8-THN or T4HN) by the polyketide synthase PfmaE though condensation of acetyl-CoA with malonyl-CoA. T4HN is not stable and easily oxidizes into the stable form flaviolin. T4HN is also substrate of the hydroxynaphthalene reductase PfmaG to yield scytalone. The scytalone dehydratase PfmaJ then reduces scytalone to 1,3,8-THN. 1,3,8-THN is then substrate of the hydroxynaphthalene reductase PfmaI to yield vermelone. Vermelone is further converted by the multicopper oxidase PfmaD to 1,8-DHN. Finally the laccase PFICI_06862 transforms 1,8-DHN to DHN-melanin. The roles of the 5-oxoprolinase PfmaA and the proline iminopeptidase PfmaB within the cluster have not been elucidated yet. This is Scytalone dehydratase PfmaJ from Pestalotiopsis fici (strain W106-1 / CGMCC3.15140).